We begin with the raw amino-acid sequence, 420 residues long: Putative competence-damage inducible protein (420 aa).

It belongs to the CinA family.

The protein is Putative competence-damage inducible protein of Lactiplantibacillus plantarum (strain ATCC BAA-793 / NCIMB 8826 / WCFS1) (Lactobacillus plantarum).